Consider the following 347-residue polypeptide: Holliday junction branch migration complex subunit RuvB (347 aa).

Residues 1–186 (MKDENSINFL…FGITARFELY (186 aa)) are large ATPase domain (RuvB-L). ATP-binding positions include Leu25, Arg26, Gly67, Lys70, Thr71, Thr72, 133–135 (EDY), Arg176, Tyr186, and Arg223. Thr71 is a Mg(2+) binding site. The tract at residues 187–257 (SEIELVEIIK…IVSIGLEMLR (71 aa)) is small ATPAse domain (RuvB-S). The tract at residues 260–347 (GEGLDEQDRN…DISENQRVSF (88 aa)) is head domain (RuvB-H). Arg315 and Arg320 together coordinate DNA.

It belongs to the RuvB family. In terms of assembly, homohexamer. Forms an RuvA(8)-RuvB(12)-Holliday junction (HJ) complex. HJ DNA is sandwiched between 2 RuvA tetramers; dsDNA enters through RuvA and exits via RuvB. An RuvB hexamer assembles on each DNA strand where it exits the tetramer. Each RuvB hexamer is contacted by two RuvA subunits (via domain III) on 2 adjacent RuvB subunits; this complex drives branch migration. In the full resolvosome a probable DNA-RuvA(4)-RuvB(12)-RuvC(2) complex forms which resolves the HJ.

Its subcellular location is the cytoplasm. It catalyses the reaction ATP + H2O = ADP + phosphate + H(+). The RuvA-RuvB-RuvC complex processes Holliday junction (HJ) DNA during genetic recombination and DNA repair, while the RuvA-RuvB complex plays an important role in the rescue of blocked DNA replication forks via replication fork reversal (RFR). RuvA specifically binds to HJ cruciform DNA, conferring on it an open structure. The RuvB hexamer acts as an ATP-dependent pump, pulling dsDNA into and through the RuvAB complex. RuvB forms 2 homohexamers on either side of HJ DNA bound by 1 or 2 RuvA tetramers; 4 subunits per hexamer contact DNA at a time. Coordinated motions by a converter formed by DNA-disengaged RuvB subunits stimulates ATP hydrolysis and nucleotide exchange. Immobilization of the converter enables RuvB to convert the ATP-contained energy into a lever motion, pulling 2 nucleotides of DNA out of the RuvA tetramer per ATP hydrolyzed, thus driving DNA branch migration. The RuvB motors rotate together with the DNA substrate, which together with the progressing nucleotide cycle form the mechanistic basis for DNA recombination by continuous HJ branch migration. Branch migration allows RuvC to scan DNA until it finds its consensus sequence, where it cleaves and resolves cruciform DNA. The sequence is that of Holliday junction branch migration complex subunit RuvB from Borrelia garinii subsp. bavariensis (strain ATCC BAA-2496 / DSM 23469 / PBi) (Borreliella bavariensis).